Consider the following 471-residue polypeptide: Phosphatidylinositol 4-kinase type 2-alpha (471 aa).

2 disordered regions span residues 1–25 (MDET…QCSP) and 48–101 (PGSA…PDDP). Residues 90–101 (AERERNKFPDDP) show a composition bias toward basic and acidic residues. A PI3K/PI4K catalytic domain is found at 117–445 (DILPERISQG…VQTPPVIVET (329 aa)). Residues 123–129 (ISQGSSG) are G-loop. Residues 124–130 (SQGSSGS) and K145 each bind ATP. The segment at 150–152 (EPY) is important for substrate binding. The interval 158-171 (KWTKWLQKLCCPCC) is important for interaction with membranes. 4 S-palmitoyl cysteine lipidation sites follow: C167, C168, C170, and C171. Residue 254 to 257 (QLFV) participates in ATP binding. The interval 261–269 (KDADYWLRR) is important for interaction with membranes. The catalytic loop stretch occupies residues 298-306 (RNTDRGNDN). The activation loop stretch occupies residues 336–356 (AIDNGLAFPLKHPDSWRAYPF). D338 is an ATP binding site. Residues 351 to 360 (WRAYPFYWAW) are important for interaction with membranes.

Belongs to the PI3/PI4-kinase family. Type II PI4K subfamily.

The protein resides in the golgi apparatus. It localises to the trans-Golgi network membrane. It is found in the membrane raft. The protein localises to the endosome. Its subcellular location is the endosome membrane. The protein resides in the cytoplasmic vesicle. It localises to the cell projection. It is found in the dendrite. The protein localises to the presynaptic cell membrane. Its subcellular location is the synapse. The protein resides in the synaptosome. It localises to the mitochondrion. It is found in the membrane. The protein localises to the cell membrane. Its subcellular location is the perikaryon. The protein resides in the neuron projection. The catalysed reaction is a 1,2-diacyl-sn-glycero-3-phospho-(1D-myo-inositol) + ATP = a 1,2-diacyl-sn-glycero-3-phospho-(1D-myo-inositol 4-phosphate) + ADP + H(+). In terms of biological role, membrane-bound phosphatidylinositol-4 kinase (PI4-kinase) that catalyzes the phosphorylation of phosphatidylinositol (PI) to phosphatidylinositol 4-phosphate (PI4P), a lipid that plays important roles in endocytosis, Golgi function, protein sorting and membrane trafficking. Besides, phosphorylation of phosphatidylinositol (PI) to phosphatidylinositol 4-phosphate (PI4P) is the first committed step in the generation of phosphatidylinositol 4,5-bisphosphate (PIP2), a precursor of the second messenger inositol 1,4,5-trisphosphate (InsP3). This Xenopus tropicalis (Western clawed frog) protein is Phosphatidylinositol 4-kinase type 2-alpha (pi4k2a).